Here is a 274-residue protein sequence, read N- to C-terminus: Diaminopimelate epimerase (274 aa).

The substrate site is built by Asn-11, Gln-44, and Asn-64. The active-site Proton donor is Cys-73. Substrate is bound by residues 74 to 75 (GN), Asn-157, Asn-190, and 208 to 209 (ER). Residue Cys-217 is the Proton acceptor of the active site. Residue 218 to 219 (GS) participates in substrate binding.

The protein belongs to the diaminopimelate epimerase family. As to quaternary structure, homodimer.

It is found in the cytoplasm. It catalyses the reaction (2S,6S)-2,6-diaminopimelate = meso-2,6-diaminopimelate. The protein operates within amino-acid biosynthesis; L-lysine biosynthesis via DAP pathway; DL-2,6-diaminopimelate from LL-2,6-diaminopimelate: step 1/1. In terms of biological role, catalyzes the stereoinversion of LL-2,6-diaminopimelate (L,L-DAP) to meso-diaminopimelate (meso-DAP), a precursor of L-lysine and an essential component of the bacterial peptidoglycan. The protein is Diaminopimelate epimerase of Pasteurella multocida (strain Pm70).